The sequence spans 88 residues: MAHKKGASSSRNGRDSAAQRLGVKRFGGQVVKAGEIIVRQRGTHFHPGVNVGRGGDDTLFATAPGSVEFGSRRGRKTVNIVPVARPEA.

A disordered region spans residues 1-21 (MAHKKGASSSRNGRDSAAQRL).

The protein belongs to the bacterial ribosomal protein bL27 family.

In Mycobacterium sp. (strain MCS), this protein is Large ribosomal subunit protein bL27.